The primary structure comprises 254 residues: Alcohol dehydrogenase (254 aa).

NAD(+) is bound at residue 10–33 (FVAGLGGIGLDTSREIVKSGPKNL). A substrate-binding site is contributed by Ser138. The active-site Proton acceptor is the Tyr151.

Belongs to the short-chain dehydrogenases/reductases (SDR) family. In terms of assembly, homodimer.

The catalysed reaction is a primary alcohol + NAD(+) = an aldehyde + NADH + H(+). It catalyses the reaction a secondary alcohol + NAD(+) = a ketone + NADH + H(+). The protein is Alcohol dehydrogenase (Adh) of Drosophila differens (Fruit fly).